Consider the following 197-residue polypeptide: Probable GTP-binding protein EngB (197 aa).

The 174-residue stretch at 22 to 195 folds into the EngB-type G domain; that stretch reads ALPELALVGR…WQWIEERTGV (174 aa). Residues 30–37, 57–61, 75–78, 142–145, and 174–176 each bind GTP; these read GRSNVGKS, GKTQT, DVPG, TKVD, and FSA. The Mg(2+) site is built by serine 37 and threonine 59.

This sequence belongs to the TRAFAC class TrmE-Era-EngA-EngB-Septin-like GTPase superfamily. EngB GTPase family. The cofactor is Mg(2+).

Necessary for normal cell division and for the maintenance of normal septation. The polypeptide is Probable GTP-binding protein EngB (Limosilactobacillus fermentum (strain NBRC 3956 / LMG 18251) (Lactobacillus fermentum)).